The primary structure comprises 142 residues: gSG7 salivary protein (142 aa).

Residues Met-1–Ala-26 form the signal peptide. 2 disulfide bridges follow: Cys-84–Cys-139 and Cys-107–Cys-117.

Associates with activated host C3-convertase complex C3bBb (C3-CFB). Interacts with host properdin (CFP), a regulator of the alternate pathway of complement. Female salivary gland (at protein level).

The protein localises to the secreted. Its function is as follows. Salivary protein that potently inhibits the alternative pathway of complement system activation in the host while having no inhibitory effect on the classical or lectin pathways. Binds and stabilizes activated host C3-convertase complex C3bBb (C3-CFB) and inhibits its convertase activity. Enhances accumulation of C3bBb on immobilized properdin. The polypeptide is gSG7 salivary protein (Anopheles albimanus (New world malaria mosquito)).